The sequence spans 359 residues: Alanine racemase, biosynthetic (359 aa).

K34 (proton acceptor; specific for D-alanine) is an active-site residue. K34 carries the N6-(pyridoxal phosphate)lysine modification. R129 serves as a coordination point for substrate. The active-site Proton acceptor; specific for L-alanine is Y255. Residue M303 participates in substrate binding.

It belongs to the alanine racemase family. As to quaternary structure, monomer but homodimer in the presence of the substrate. It depends on pyridoxal 5'-phosphate as a cofactor.

The enzyme catalyses L-alanine = D-alanine. Its pathway is amino-acid biosynthesis; D-alanine biosynthesis; D-alanine from L-alanine: step 1/1. The protein operates within cell wall biogenesis; peptidoglycan biosynthesis. In terms of biological role, catalyzes the interconversion of L-alanine and D-alanine. This Shigella dysenteriae protein is Alanine racemase, biosynthetic (alr).